The chain runs to 293 residues: Small ribosomal subunit protein uS3 (293 aa).

The KH type-2 domain maps to 39 to 107 (VREYLKAKLK…PVAVNIEEVR (69 aa)). The disordered stretch occupies residues 210–293 (RNDLPAVETP…PATAADGKGE (84 aa)). The segment covering 219-238 (PRPEEERRPRGPRRDGRPGG) has biased composition (basic and acidic residues).

The protein belongs to the universal ribosomal protein uS3 family. In terms of assembly, part of the 30S ribosomal subunit. Forms a tight complex with proteins S10 and S14.

Functionally, binds the lower part of the 30S subunit head. Binds mRNA in the 70S ribosome, positioning it for translation. The chain is Small ribosomal subunit protein uS3 from Paracidovorax citrulli (strain AAC00-1) (Acidovorax citrulli).